The sequence spans 690 residues: Protein-glucosylgalactosylhydroxylysine glucosidase (690 aa).

299-300 (WD) serves as a coordination point for substrate. Glu-429 functions as the Proton donor in the catalytic mechanism. 497–498 (KQ) is a binding site for substrate.

The protein belongs to the glycosyl hydrolase 65 family.

The catalysed reaction is (5R)-5-O-[alpha-D-glucosyl-(1-&gt;2)-beta-D-galactosyl]-5-hydroxy-L-lysyl-[collagen] + H2O = (5R)-5-O-(beta-D-galactosyl)-5-hydroxy-L-lysyl-[collagen] + D-glucose. In terms of biological role, catalyzes the hydrolysis of glucose from the disaccharide unit linked to hydroxylysine residues of collagen and collagen-like proteins. This chain is Protein-glucosylgalactosylhydroxylysine glucosidase, found in Mus musculus (Mouse).